The primary structure comprises 804 residues: Elongation factor G, mitochondrial (804 aa).

A mitochondrion-targeting transit peptide spans 1-63; the sequence is MSMHRVARAV…RHFFQSPIIR (63 aa). One can recognise a tr-type G domain in the interval 99 to 385; sequence RRVRNIGIAA…AVCDYLPNPA (287 aa). GTP is bound by residues 108–115, 183–187, and 237–240; these read AHIDSGKT, DTPGH, and NKMD.

Belongs to the TRAFAC class translation factor GTPase superfamily. Classic translation factor GTPase family. EF-G/EF-2 subfamily.

It is found in the mitochondrion. Its pathway is protein biosynthesis; polypeptide chain elongation. In terms of biological role, mitochondrial GTPase that catalyzes the GTP-dependent ribosomal translocation step during translation elongation. During this step, the ribosome changes from the pre-translocational (PRE) to the post-translocational (POST) state as the newly formed A-site-bound peptidyl-tRNA and P-site-bound deacylated tRNA move to the P and E sites, respectively. Catalyzes the coordinated movement of the two tRNA molecules, the mRNA and conformational changes in the ribosome. The polypeptide is Elongation factor G, mitochondrial (mef1) (Sclerotinia sclerotiorum (strain ATCC 18683 / 1980 / Ss-1) (White mold)).